The chain runs to 55 residues: UPF0391 membrane protein Meso_3110 (55 aa).

2 consecutive transmembrane segments (helical) span residues 4–24 (WALV…GGIA) and 30–50 (IAQI…LFGL).

The protein belongs to the UPF0391 family.

It localises to the cell membrane. In Chelativorans sp. (strain BNC1), this protein is UPF0391 membrane protein Meso_3110.